A 295-amino-acid polypeptide reads, in one-letter code: Large ribosomal subunit protein uL2 (295 aa).

Residues 243 to 295 (WRPHTRGTAMNPVDHPHGGGEGRTRGKHPESPWDGRRRDTRREGVRSTPISLS) are disordered. Residues 256-287 (DHPHGGGEGRTRGKHPESPWDGRRRDTRREGV) are compositionally biased toward basic and acidic residues.

It belongs to the universal ribosomal protein uL2 family. Part of the 50S ribosomal subunit. Forms a bridge to the 30S subunit in the 70S ribosome.

One of the primary rRNA binding proteins. Required for association of the 30S and 50S subunits to form the 70S ribosome, for tRNA binding and peptide bond formation. It has been suggested to have peptidyltransferase activity; this is somewhat controversial. Makes several contacts with the 16S rRNA in the 70S ribosome. This is Large ribosomal subunit protein uL2 from Aquifex pyrophilus.